The sequence spans 556 residues: Oxygen-dependent choline dehydrogenase (556 aa).

6-35 (DYIIIGAGSAGNVLAARLTEDPGVSVLLLE) is an FAD binding site. Residue His475 is the Proton acceptor of the active site.

Belongs to the GMC oxidoreductase family. The cofactor is FAD.

The enzyme catalyses choline + A = betaine aldehyde + AH2. The catalysed reaction is betaine aldehyde + NAD(+) + H2O = glycine betaine + NADH + 2 H(+). It functions in the pathway amine and polyamine biosynthesis; betaine biosynthesis via choline pathway; betaine aldehyde from choline (cytochrome c reductase route): step 1/1. Its function is as follows. Involved in the biosynthesis of the osmoprotectant glycine betaine. Catalyzes the oxidation of choline to betaine aldehyde and betaine aldehyde to glycine betaine at the same rate. The polypeptide is Oxygen-dependent choline dehydrogenase (Xanthomonas campestris pv. campestris (strain 8004)).